A 366-amino-acid polypeptide reads, in one-letter code: DNA replication and repair protein RecF (366 aa).

30–37 (GRNAQGKT) is a binding site for ATP.

The protein belongs to the RecF family.

It localises to the cytoplasm. Functionally, the RecF protein is involved in DNA metabolism; it is required for DNA replication and normal SOS inducibility. RecF binds preferentially to single-stranded, linear DNA. It also seems to bind ATP. The protein is DNA replication and repair protein RecF of Streptococcus thermophilus (strain CNRZ 1066).